Consider the following 192-residue polypeptide: Fe/S biogenesis protein NfuA (192 aa).

[4Fe-4S] cluster contacts are provided by Cys149 and Cys152.

It belongs to the NfuA family. Homodimer. Requires [4Fe-4S] cluster as cofactor.

Functionally, involved in iron-sulfur cluster biogenesis. Binds a 4Fe-4S cluster, can transfer this cluster to apoproteins, and thereby intervenes in the maturation of Fe/S proteins. Could also act as a scaffold/chaperone for damaged Fe/S proteins. The sequence is that of Fe/S biogenesis protein NfuA from Shewanella baltica (strain OS223).